The primary structure comprises 623 residues: Lamin-B2.L (623 aa).

Positions 1–18 (MATTTPSRSTRSSMQSPA) are enriched in low complexity. The tract at residues 1 to 30 (MATTTPSRSTRSSMQSPARGTSTPLSPTRI) is disordered. Residues 2-27 (ATTTPSRSTRSSMQSPARGTSTPLSP) are head. Over residues 19–30 (RGTSTPLSPTRI) the composition is skewed to polar residues. Ser26 bears the Phosphoserine mark. The segment at 28-64 (TRISRLQEKEELRHLNDRLAVYIDRVRALELENDRLM) is coil 1A. The 357-residue stretch at 35-391 (EKEELRHLND…KLLEGEEERL (357 aa)) folds into the IF rod domain. The linker 1 stretch occupies residues 64-74 (MVKISEKEEVT). The segment at 75–211 (TREVSGIKNL…QSLQEEMDFR (137 aa)) is coil 1B. The segment at 212–235 (KNIYEEESRETRKRHERRIVEVDR) is linker 2. A coil 2 region spans residues 236-378 (GHHYDYESKL…VKLALDLEIN (143 aa)). The interval 380–592 (YRKLLEGEEE…VTKSVLRNVE (213 aa)) is tail. Disordered stretches follow at residues 388-473 (EERL…LSQQ) and 591-623 (VEEE…CSVM). Ser396 is subject to Phosphoserine. Positions 398–416 (ESRVTVSRATSSSSSATRT) are enriched in low complexity. Residues 420 to 425 (KRRRVE) carry the Nuclear localization signal motif. Over residues 443–473 (LGSSRITASEGSSRTITSGQSSTTRFHLSQQ) the composition is skewed to polar residues. The LTD domain maps to 468 to 585 (FHLSQQASAT…EEVAVRTVTK (118 aa)). Over residues 592-604 (EEEEDEDADFGEE) the composition is skewed to acidic residues. Positions 612–623 (DPRTTSRGCSVM) are enriched in polar residues. Residue Cys620 is modified to Cysteine methyl ester. A lipid anchor (S-farnesyl cysteine) is attached at Cys620. A propeptide spans 621–623 (SVM) (removed in mature form).

It belongs to the intermediate filament family. In terms of processing, phosphorylation plays a key role in lamin organization, subcellular localization and nuclear envelope disintegration. Phosphorylation by CDK1 at Ser-26 at the onset of mitosis drives lamin disassembly and nuclear envelope breakdown.

The protein resides in the nucleus lamina. It is found in the nucleus envelope. The protein localises to the nucleus. It localises to the nucleoplasm. Its subcellular location is the nucleus matrix. Lamins are intermediate filament proteins that assemble into a filamentous meshwork, and which constitute the major components of the nuclear lamina, a fibrous layer on the nucleoplasmic side of the inner nuclear membrane. Lamins provide a framework for the nuclear envelope, bridging the nuclear envelope and chromatin, thereby playing an important role in nuclear assembly, chromatin organization, nuclear membrane and telomere dynamics. The structural integrity of the lamina is strictly controlled by the cell cycle, as seen by the disintegration and formation of the nuclear envelope in prophase and telophase, respectively. The sequence is that of Lamin-B2.L (lmnb2.L) from Xenopus laevis (African clawed frog).